The sequence spans 464 residues: Zinc transporter 6-A (464 aa).

At 1–33 the chain is on the cytoplasmic side; the sequence is MGTIYLFRKTQRSLLGKLAQEFRLVTADRRSWK. A helical transmembrane segment spans residues 34–54; sequence ILLFGAINVVCTAFLLTWCSS. Topologically, residues 55 to 64 are extracellular; that stretch reads TNSMALTAYT. A helical membrane pass occupies residues 65 to 85; the sequence is YLTIFDLFSLITSLISYWVTM. Over 86 to 98 the chain is Cytoplasmic; sequence KKPSPTYSFGFER. Residues 99–119 traverse the membrane as a helical segment; sequence FEVLAVFASTVLAQLGALFIL. At 120-134 the chain is on the extracellular side; sequence KESAERFIEQPEIHT. The chain crosses the membrane as a helical span at residues 135 to 155; that stretch reads GRLLVGTFVALFFNLFTMLSI. Residues 156-200 lie on the Cytoplasmic side of the membrane; that stretch reads RNKPFAYVSDAASTSWLQEHVADLSRSLCGIIPGLSSIFLPRMNP. The helical transmembrane segment at 201 to 221 threads the bilayer; it reads FVLIDIAGALALCITYMLIEI. Residues 222-223 are Extracellular-facing; sequence NN. Residues 224–244 traverse the membrane as a helical segment; that stretch reads YFAVDTASAVAIAVMTFGTMY. Over 245–464 the chain is Cytoplasmic; it reads PMSVYSGKVL…TPGQFTQFRQ (220 aa).

This sequence belongs to the cation diffusion facilitator (CDF) transporter (TC 2.A.4) family. SLC30A subfamily. Heterodimer with SLC30A5; form a functional zinc ion transmembrane transporter.

The protein localises to the golgi apparatus. It localises to the trans-Golgi network membrane. Has probably no intrinsic transporter activity but together with SLC30A5 forms a functional zinc ion:proton antiporter heterodimer, mediating zinc entry into the lumen of organelles along the secretory pathway. As part of that zinc ion:proton antiporter, contributes to zinc ion homeostasis within the early secretory pathway and regulates the activation and folding of enzymes like alkaline phosphatases and enzymes involved in phosphatidylinositol glycan anchor biosynthesis. The protein is Zinc transporter 6-A (slc30a6-a) of Xenopus laevis (African clawed frog).